Here is a 471-residue protein sequence, read N- to C-terminus: Neuraminidase (471 aa).

Topologically, residues 1 to 6 (MNPNQK) are intravirion. Residues 7–27 (LFALSGVAIALSVMNLLIGIS) traverse the membrane as a helical segment. Residues 11–33 (SGVAIALSVMNLLIGISNVGLNV) form an involved in apical transport and lipid raft association region. The Virion surface segment spans residues 28–471 (NVGLNVSLHL…PDGAQIQYFS (444 aa)). N-linked (GlcNAc...) asparagine; by host glycans are attached at residues Asn32, Asn47, Asn56, Asn57, Asn67, Asn68, and Asn87. The segment at 36–87 (HLKEKGTKQEENLTCTTITQNNTTVVENTYVNNTTIITKEPDLKAPSYLLLN) is hypervariable stalk region. Positions 90-471 (LCSVEGWVVI…PDGAQIQYFS (382 aa)) are head of neuraminidase. Disulfide bonds link Cys91–Cys419, Cys123–Cys128, Cys183–Cys230, Cys232–Cys237, Cys278–Cys291, Cys280–Cys289, Cys318–Cys336, and Cys423–Cys450. Arg117 contacts substrate. N-linked (GlcNAc...) asparagine; by host glycosylation occurs at Asn145. The active-site Proton donor/acceptor is Asp150. Arg151 is a binding site for substrate. Asn200 and Asn234 each carry an N-linked (GlcNAc...) asparagine; by host glycan. A substrate-binding site is contributed by 276–277 (EE). Arg292 provides a ligand contact to substrate. 3 residues coordinate Ca(2+): Asp293, Gly297, and Asp324. Residue Arg371 coordinates substrate. A glycan (N-linked (GlcNAc...) asparagine; by host) is linked at Asn401. Tyr405 (nucleophile) is an active-site residue.

It belongs to the glycosyl hydrolase 34 family. As to quaternary structure, homotetramer. Requires Ca(2+) as cofactor. Post-translationally, N-glycosylated.

It is found in the virion membrane. The protein resides in the host apical cell membrane. It carries out the reaction Hydrolysis of alpha-(2-&gt;3)-, alpha-(2-&gt;6)-, alpha-(2-&gt;8)- glycosidic linkages of terminal sialic acid residues in oligosaccharides, glycoproteins, glycolipids, colominic acid and synthetic substrates.. Its activity is regulated as follows. Inhibited by the neuraminidase inhibitors zanamivir (Relenza) and oseltamivir (Tamiflu). These drugs interfere with the release of progeny virus from infected cells and are effective against all influenza strains. Resistance to neuraminidase inhibitors is quite rare. Functionally, catalyzes the removal of terminal sialic acid residues from viral and cellular glycoconjugates. Cleaves off the terminal sialic acids on the glycosylated HA during virus budding to facilitate virus release. Additionally helps virus spread through the circulation by further removing sialic acids from the cell surface. These cleavages prevent self-aggregation and ensure the efficient spread of the progeny virus from cell to cell. Otherwise, infection would be limited to one round of replication. Described as a receptor-destroying enzyme because it cleaves a terminal sialic acid from the cellular receptors. May facilitate viral invasion of the upper airways by cleaving the sialic acid moieties on the mucin of the airway epithelial cells. Likely to plays a role in the budding process through its association with lipid rafts during intracellular transport. May additionally display a raft-association independent effect on budding. Plays a role in the determination of host range restriction on replication and virulence. Sialidase activity in late endosome/lysosome traffic seems to enhance virus replication. This is Neuraminidase from Influenza A virus (strain A/Duck/Germany/1949 H10N7).